A 501-amino-acid chain; its full sequence is Lysine--tRNA ligase (501 aa).

Glu411 and Glu418 together coordinate Mg(2+).

The protein belongs to the class-II aminoacyl-tRNA synthetase family. In terms of assembly, homodimer. It depends on Mg(2+) as a cofactor.

Its subcellular location is the cytoplasm. It catalyses the reaction tRNA(Lys) + L-lysine + ATP = L-lysyl-tRNA(Lys) + AMP + diphosphate. The sequence is that of Lysine--tRNA ligase from Thiobacillus denitrificans (strain ATCC 25259 / T1).